Consider the following 753-residue polypeptide: Transcription factor SOX-30 (753 aa).

Disordered regions lie at residues 1 to 45 (MERA…TLSA) and 140 to 161 (QELG…TGPR). Residues 7–22 (EPQPQQRPLRPAPPLL) show a composition bias toward pro residues. The segment at residues 337-405 (VKRPMNAFMV…KHREEFPGWV (69 aa)) is a DNA-binding region (HMG box). 2 disordered regions span residues 514-540 (AGPS…PVSL) and 726-753 (PTST…LRDL). 2 stretches are compositionally biased toward polar residues: residues 531 to 540 (TVKQPTPVSL) and 726 to 739 (PTST…VNVT).

In terms of assembly, interacts with CTNNB1, competitively inhibiting CTNNB1-TCF7L2/TCF4 interaction.

The protein localises to the nucleus. Its subcellular location is the cytoplasm. Its function is as follows. Acts both as a transcriptional activator and a repressor. Binds to the DNA sequence 5'-ACAAT-3' and shows a preference for guanine residues surrounding this core motif. Binds to its own promoter and activates its own transcription. Required to activate the expression of postmeiotic genes involved in spermiogenesis. Binds to the promoter region of CTNNB1 and represses its transcription which leads to inhibition of Wnt signaling. Also inhibits Wnt signaling by binding to the CTNNB1 protein, preventing interaction of CTNNB1 with TCF7L2/TCF4. The protein is Transcription factor SOX-30 (SOX30) of Macaca fascicularis (Crab-eating macaque).